The primary structure comprises 50 residues: Sperm protamine P1 (50 aa).

It belongs to the protamine P1 family. As to expression, testis.

It is found in the nucleus. It localises to the chromosome. Protamines substitute for histones in the chromatin of sperm during the haploid phase of spermatogenesis. They compact sperm DNA into a highly condensed, stable and inactive complex. The sequence is that of Sperm protamine P1 (PRM1) from Trachypithecus phayrei (Phayre's leaf monkey).